Consider the following 618-residue polypeptide: Zinc finger protein 48 (618 aa).

The residue at position 1 (Met-1) is an N-acetylmethionine. 2 stretches are compositionally biased toward basic and acidic residues: residues 1–22 (MERAVEPWGPDLHRPEEREPQR) and 39–51 (EFEHTPQEDDLGF). 2 disordered regions span residues 1-51 (MERA…DLGF) and 78-109 (LWVQREGLGKPQPRDRGPRLLGEPRWGQASSD). A Glycyl lysine isopeptide (Lys-Gly) (interchain with G-Cter in SUMO2) cross-link involves residue Lys-87. 2 C2H2-type zinc fingers span residues 112–134 (AVCGECGKSFRQMSDLVKHQRTH) and 140–162 (YKCGVCGKGFGDSSARIKHQRTH). The disordered stretch occupies residues 157-189 (KHQRTHSGEKPYRARPPAQGPPKIPRSRIPAGE). A Glycyl lysine isopeptide (Lys-Gly) (interchain with G-Cter in SUMO2) cross-link involves residue Lys-179. 2 consecutive C2H2-type zinc fingers follow at residues 192 to 214 (TICGECGKSFRQSSDLVKHQRTH) and 220 to 242 (YKCGICGKGFGDSSARIKHQRTH). The tract at residues 235–271 (RIKHQRTHRGEQPPRPVVPRRQPSRAATAATQGPKAQ) is disordered. A Glycyl lysine isopeptide (Lys-Gly) (interchain with G-Cter in SUMO2) cross-link involves residue Lys-269. 2 C2H2-type zinc fingers span residues 275 to 297 (YICTDCGKRFVLSCSLLSHQRSH) and 303 to 325 (FGCDVCGKEFARGSDLVKHLRVH). A Glycyl lysine isopeptide (Lys-Gly) (interchain with G-Cter in SUMO2) cross-link involves residue Lys-329. C2H2-type zinc fingers lie at residues 331 to 353 (YLCPECGKGFADSSARVKHLRTH) and 359 to 381 (HACPECDRTFSLSSTLLRHRLTH). The segment covering 392–414 (YPLPALIPSPPPPPLGTSPPLTP) has biased composition (pro residues). The disordered stretch occupies residues 392–457 (YPLPALIPSP…DKPHKCPECG (66 aa)). Over residues 415-432 (RSPSHSGEPFGLPGLEPE) the composition is skewed to low complexity. Residues 451 to 473 (HKCPECGKGFRRSSDLVKHHRVH) form a C2H2-type 9 zinc finger. Lys-477 participates in a covalent cross-link: Glycyl lysine isopeptide (Lys-Gly) (interchain with G-Cter in SUMO2). A C2H2-type 10 zinc finger spans residues 479 to 501 (YLCPECGKGFADSSARVKHLRTH). A disordered region spans residues 500–540 (THRGERARPPPPSTLLRPHNPPGPVPMAPRPRVRAQPSGPS). Over residues 508–528 (PPPPSTLLRPHNPPGPVPMAP) the composition is skewed to pro residues. C2H2-type zinc fingers lie at residues 543–565 (HVCGFCGKEFPRSSDLVKHRRTH) and 571–593 (YKCAECGKGFGDSSARIKHQRGH). A Glycyl lysine isopeptide (Lys-Gly) (interchain with G-Cter in SUMO2) cross-link involves residue Lys-610.

It belongs to the krueppel C2H2-type zinc-finger protein family.

Its subcellular location is the nucleus. In terms of biological role, may be involved in transcriptional regulation. In Homo sapiens (Human), this protein is Zinc finger protein 48 (ZNF48).